The sequence spans 318 residues: MTLSLIIKWGGQEFPLSALSEEDTVLDLKHSLKSLTGVLPERMKLLGLKYKGKPAENDVKLGVLRLKPNTKIMMMGTREESLEEMMAPPPDNDEVVNDFDIDEEVVEVENREENLAKISRRVKDYKVEVLNPPREGKKLLVLDVDYTLFDHRSCAETGQELMRPYLHEFLSSAYEDYDIVIWSATSMKWIEAKMKELGVTTNANYKITFMLDSAAMITVHTPRRGLVDVKPLGVIWGKYGEFYSKNNTIMFDDIGRNFLMNPQNGLKIRPFMKAHLNRDKDKELVKLSQYLKEIAQLDDLSELNHKHWERYLAKKQGQ.

Residues 3 to 81 enclose the Ubiquitin-like domain; the sequence is LSLIIKWGGQ…IMMMGTREES (79 aa). The region spanning 133–294 is the FCP1 homology domain; sequence PREGKKLLVL…VKLSQYLKEI (162 aa). Aspartate 143, aspartate 145, and aspartate 253 together coordinate Mg(2+).

Requires Mg(2+) as cofactor.

Its subcellular location is the nucleus. The catalysed reaction is O-phospho-L-seryl-[protein] + H2O = L-seryl-[protein] + phosphate. It catalyses the reaction O-phospho-L-threonyl-[protein] + H2O = L-threonyl-[protein] + phosphate. Functionally, dephosphorylates 26S nuclear proteasomes, thereby decreasing their proteolytic activity. Recruited to the 19S regulatory particle of the 26S proteasome where it dephosphorylates 19S component psmc2 which impairs psmc2 ATPase activity and disrupts 26S proteasome assembly. Has also been reported to stimulate the proteolytic activity of the 26S proteasome. The protein is Ubiquitin-like domain-containing CTD phosphatase 1 (ublcp1) of Xenopus laevis (African clawed frog).